We begin with the raw amino-acid sequence, 354 residues long: B-cell differentiation antigen CD72 (354 aa).

Residues 1-95 lie on the Cytoplasmic side of the membrane; sequence MADAITYADL…PRCPTVCLQY (95 aa). 2 positions are modified to phosphotyrosine; by LYN: tyrosine 7 and tyrosine 39. A helical; Signal-anchor for type II membrane protein membrane pass occupies residues 96 to 116; sequence FLLGLLVSCLMLGVAVICLGV. Residues 117 to 354 lie on the Extracellular side of the membrane; that stretch reads RYLQVSRQFQ…FRFPDGINLN (238 aa). An N-linked (GlcNAc...) asparagine glycan is attached at asparagine 136. Residues 231–342 form the C-type lectin domain; sequence CCPCGWIPYQ…AELHPCICES (112 aa). 3 cysteine pairs are disulfide-bonded: cysteine 232/cysteine 243, cysteine 260/cysteine 340, and cysteine 315/cysteine 332.

As to quaternary structure, homodimer; disulfide-linked. Associates with CD5. Interacts (tyrosine phosphorylated) with PTPN6/SHP-1. In terms of processing, phosphorylated upon engagement of the B-cell receptor, probably by LYN or SYK. Phosphorylation at Tyr-7 is important for interaction with PTPN6/SHP-1. In terms of tissue distribution, pre-B-cells and B-cells but not terminally differentiated plasma cells.

It is found in the membrane. Co-receptor of B cell receptor (BCR) that plays both positive and negative roles on B-cell functions. Recognizes the Sm/ribonucleoprotein (RNP) self-antigen ligand, and coligation of CD72 and BCR inhibits BCR signaling. Mechanistically, ligand binding leads to the recruitment of PTPN6/SHP-1 to the BCR complex which is inhibitory to BCR signaling. Acts also as a ligand for CD5 and thereby plays a critical role in maintaining regulatory T and B-cell homeostasis. The sequence is that of B-cell differentiation antigen CD72 (Cd72) from Mus musculus (Mouse).